The primary structure comprises 217 residues: FMN-dependent NADH:quinone oxidoreductase (217 aa).

Residues S10 and 16 to 18 (SVS) contribute to the FMN site.

The protein belongs to the azoreductase type 1 family. As to quaternary structure, homodimer. It depends on FMN as a cofactor.

The enzyme catalyses 2 a quinone + NADH + H(+) = 2 a 1,4-benzosemiquinone + NAD(+). The catalysed reaction is N,N-dimethyl-1,4-phenylenediamine + anthranilate + 2 NAD(+) = 2-(4-dimethylaminophenyl)diazenylbenzoate + 2 NADH + 2 H(+). Its function is as follows. Quinone reductase that provides resistance to thiol-specific stress caused by electrophilic quinones. Functionally, also exhibits azoreductase activity. Catalyzes the reductive cleavage of the azo bond in aromatic azo compounds to the corresponding amines. The protein is FMN-dependent NADH:quinone oxidoreductase of Polaromonas naphthalenivorans (strain CJ2).